Reading from the N-terminus, the 69-residue chain is uncharacterized protein (69 aa).

The signal sequence occupies residues 1-19 (MKRIWVSLMIAITACSAHA).

This is an uncharacterized protein from Pasteurella multocida (strain Pm70).